The chain runs to 325 residues: Transaldolase (325 aa).

The active-site Schiff-base intermediate with substrate is the Lys-125.

It belongs to the transaldolase family. Type 2 subfamily.

Its subcellular location is the cytoplasm. The enzyme catalyses D-sedoheptulose 7-phosphate + D-glyceraldehyde 3-phosphate = D-erythrose 4-phosphate + beta-D-fructose 6-phosphate. The protein operates within carbohydrate degradation; pentose phosphate pathway; D-glyceraldehyde 3-phosphate and beta-D-fructose 6-phosphate from D-ribose 5-phosphate and D-xylulose 5-phosphate (non-oxidative stage): step 2/3. In terms of biological role, transaldolase is important for the balance of metabolites in the pentose-phosphate pathway. The polypeptide is Transaldolase (tal) (Campylobacter jejuni subsp. jejuni serotype O:2 (strain ATCC 700819 / NCTC 11168)).